Consider the following 122-residue polypeptide: Cupin 2 conserved barrel domain-containing protein (122 aa).

The tract at residues 55–119 (PGGVTTAEDH…DSPVEIVSIW (65 aa)) is cupin 2 conserved barrel. Residues Asp-63, His-65, Glu-69, and His-103 each contribute to the Zn(2+) site.

Zn(2+) serves as cofactor.

The enzyme catalyses N(6)-hydroxy-L-lysine + L-glutamate + ATP = 1-L-glutamo-2-N(6-)L-lysinohydrazine + AMP + diphosphate + 2 H(+). Its activity is regulated as follows. Inhibited by 1,10-phenanthroline (OP). Catalyzes hydrazine (N-N) bond formation from an unstable ester intermediate, the product of the ATP-dependent condensation of L-N(6)-OH-lysine and L-glutamine substrates by a methionyl-tRNA synthase-like protein. This chain is Cupin 2 conserved barrel domain-containing protein, found in Rhodococcus jostii (strain RHA1).